A 336-amino-acid chain; its full sequence is MDRIVEIEKVSFENDFEVSLRPSKFEDYIGQEKIKQNLDVFIKAAKKRNECLDHVLFYGPPGLGKTTLAHIIANEMGVSIKMTAAPMIEKSGDLAAILTNLQEGDVLFIDEIHRLSPAIEEVLYPAMEDFRLDIIIGSGPAAQTIKIDLPKFTLIGATTRAGMISAPLRDRFGMDFRLQFYTSSELSRIVQIASAKLGKECDKNASLEIAKRSRATPRIALRLLKRIRDFAEVNDEQIISHERAKEGLNALGVNSLGFDEMDIRYLEILMQARRRPMGLSTIAAALSEDEGTVEDVIEPYLLANGFIERTAKGRIASAKCFETFNVKIDIEKGLFE.

The tract at residues 1 to 181 (MDRIVEIEKV…FGMDFRLQFY (181 aa)) is large ATPase domain (RuvB-L). ATP-binding positions include L20, R21, G62, K65, T66, T67, 128-130 (EDF), R171, Y181, and R218. Position 66 (T66) interacts with Mg(2+). The segment at 182–252 (TSSELSRIVQ…RAKEGLNALG (71 aa)) is small ATPAse domain (RuvB-S). A head domain (RuvB-H) region spans residues 255-336 (SLGFDEMDIR…KIDIEKGLFE (82 aa)). DNA contacts are provided by R309 and R314.

It belongs to the RuvB family. As to quaternary structure, homohexamer. Forms an RuvA(8)-RuvB(12)-Holliday junction (HJ) complex. HJ DNA is sandwiched between 2 RuvA tetramers; dsDNA enters through RuvA and exits via RuvB. An RuvB hexamer assembles on each DNA strand where it exits the tetramer. Each RuvB hexamer is contacted by two RuvA subunits (via domain III) on 2 adjacent RuvB subunits; this complex drives branch migration. In the full resolvosome a probable DNA-RuvA(4)-RuvB(12)-RuvC(2) complex forms which resolves the HJ.

Its subcellular location is the cytoplasm. It carries out the reaction ATP + H2O = ADP + phosphate + H(+). In terms of biological role, the RuvA-RuvB-RuvC complex processes Holliday junction (HJ) DNA during genetic recombination and DNA repair, while the RuvA-RuvB complex plays an important role in the rescue of blocked DNA replication forks via replication fork reversal (RFR). RuvA specifically binds to HJ cruciform DNA, conferring on it an open structure. The RuvB hexamer acts as an ATP-dependent pump, pulling dsDNA into and through the RuvAB complex. RuvB forms 2 homohexamers on either side of HJ DNA bound by 1 or 2 RuvA tetramers; 4 subunits per hexamer contact DNA at a time. Coordinated motions by a converter formed by DNA-disengaged RuvB subunits stimulates ATP hydrolysis and nucleotide exchange. Immobilization of the converter enables RuvB to convert the ATP-contained energy into a lever motion, pulling 2 nucleotides of DNA out of the RuvA tetramer per ATP hydrolyzed, thus driving DNA branch migration. The RuvB motors rotate together with the DNA substrate, which together with the progressing nucleotide cycle form the mechanistic basis for DNA recombination by continuous HJ branch migration. Branch migration allows RuvC to scan DNA until it finds its consensus sequence, where it cleaves and resolves cruciform DNA. This is Holliday junction branch migration complex subunit RuvB from Campylobacter concisus (strain 13826).